A 239-amino-acid polypeptide reads, in one-letter code: RNA polymerase sigma-35 factor (239 aa).

Residues 1-27 (MMKLKFYLVYLWYKVLLKLGIKTDEIY) constitute a propeptide that is removed on maturation. The Polymerase core binding signature appears at 86-99 (DLISIGTIGLIKAV). The segment at residues 206–225 (QKDVADMLGISQSYISRLEK) is a DNA-binding region (H-T-H motif).

This sequence belongs to the sigma-70 factor family. Post-translationally, proteolytically cleaved in the N-terminus probably by a SpoIIGA homolog to yield the active peptide.

Its function is as follows. Sigma factors are initiation factors that promote the attachment of RNA polymerase to specific initiation sites and are then released. This sigma factor directs the transcription of crystal protein genes, a sporulation-regulated event. The polypeptide is RNA polymerase sigma-35 factor (sigE) (Bacillus anthracis).